The chain runs to 123 residues: Small ribosomal subunit protein uS12 (123 aa).

The segment at 1-29 (MPTINQLIRKKRQSSASRKKSPALQKCPQ) is disordered. A compositionally biased stretch (basic residues) spans 8–21 (IRKKRQSSASRKKS). Position 89 is a 3-methylthioaspartic acid (D89).

This sequence belongs to the universal ribosomal protein uS12 family. Part of the 30S ribosomal subunit. Contacts proteins S8 and S17. May interact with IF1 in the 30S initiation complex.

With S4 and S5 plays an important role in translational accuracy. Its function is as follows. Interacts with and stabilizes bases of the 16S rRNA that are involved in tRNA selection in the A site and with the mRNA backbone. Located at the interface of the 30S and 50S subunits, it traverses the body of the 30S subunit contacting proteins on the other side and probably holding the rRNA structure together. The combined cluster of proteins S8, S12 and S17 appears to hold together the shoulder and platform of the 30S subunit. The chain is Small ribosomal subunit protein uS12 from Chlamydia abortus (strain DSM 27085 / S26/3) (Chlamydophila abortus).